A 458-amino-acid polypeptide reads, in one-letter code: tRNA modification GTPase MnmE (458 aa).

3 residues coordinate (6S)-5-formyl-5,6,7,8-tetrahydrofolate: Arg-26, Glu-88, and Arg-127. Positions Gly-224 to Phe-378 constitute a TrmE-type G domain. Asn-234 contributes to the K(+) binding site. GTP contacts are provided by residues Asn-234–Ser-239, Thr-253–Thr-259, and Asp-278–Gly-281. A Mg(2+)-binding site is contributed by Ser-238. Residues Thr-253, Ile-255, and Thr-258 each contribute to the K(+) site. Thr-259 is a Mg(2+) binding site. Lys-458 contacts (6S)-5-formyl-5,6,7,8-tetrahydrofolate.

It belongs to the TRAFAC class TrmE-Era-EngA-EngB-Septin-like GTPase superfamily. TrmE GTPase family. As to quaternary structure, homodimer. Heterotetramer of two MnmE and two MnmG subunits. K(+) is required as a cofactor.

The protein localises to the cytoplasm. Functionally, exhibits a very high intrinsic GTPase hydrolysis rate. Involved in the addition of a carboxymethylaminomethyl (cmnm) group at the wobble position (U34) of certain tRNAs, forming tRNA-cmnm(5)s(2)U34. The chain is tRNA modification GTPase MnmE from Streptococcus pyogenes serotype M6 (strain ATCC BAA-946 / MGAS10394).